Here is a 274-residue protein sequence, read N- to C-terminus: Undecaprenyl-diphosphatase (274 aa).

8 helical membrane passes run 4–24, 46–66, 86–106, 109–129, 145–165, 188–208, 214–234, and 250–270; these read LLVI…LLPI, VVFE…EYRV, INVA…SDFI, VLFS…IIMW, ISYA…IPGT, FSFF…LWEA, IEDM…TFAV, and FAWY…TGVI.

This sequence belongs to the UppP family.

The protein resides in the cell inner membrane. The enzyme catalyses di-trans,octa-cis-undecaprenyl diphosphate + H2O = di-trans,octa-cis-undecaprenyl phosphate + phosphate + H(+). Functionally, catalyzes the dephosphorylation of undecaprenyl diphosphate (UPP). Confers resistance to bacitracin. The protein is Undecaprenyl-diphosphatase of Cellvibrio japonicus (strain Ueda107) (Pseudomonas fluorescens subsp. cellulosa).